A 359-amino-acid chain; its full sequence is 5-amino-6-(D-ribitylamino)uracil--L-tyrosine 4-hydroxyphenyl transferase (359 aa).

Positions V45–K282 constitute a Radical SAM core domain. [4Fe-4S] cluster-binding residues include C59, C63, and C66.

This sequence belongs to the radical SAM superfamily. CofH family. Consists of two subunits, CofG and CofH. The cofactor is [4Fe-4S] cluster.

The catalysed reaction is 5-amino-6-(D-ribitylamino)uracil + L-tyrosine + S-adenosyl-L-methionine = 5-amino-5-(4-hydroxybenzyl)-6-(D-ribitylimino)-5,6-dihydrouracil + 2-iminoacetate + 5'-deoxyadenosine + L-methionine + H(+). It functions in the pathway cofactor biosynthesis; coenzyme F0 biosynthesis. Its function is as follows. Catalyzes the radical-mediated synthesis of 5-amino-5-(4-hydroxybenzyl)-6-(D-ribitylimino)-5,6-dihydrouracil from 5-amino-6-(D-ribitylamino)uracil and L-tyrosine. This chain is 5-amino-6-(D-ribitylamino)uracil--L-tyrosine 4-hydroxyphenyl transferase, found in Methanococcus maripaludis (strain C5 / ATCC BAA-1333).